An 848-amino-acid chain; its full sequence is MIDGLRKKFIDFFVKNGHTYLPSASLVPKDDPSLMFVNAGMVPFKEYFVDVRRAPFSSIVTAQKCVRAGGKHNDLENVGFTKRHHTFFEMLGNFSFGCYFKERAIELAWKFVTEELTLSKKKLYITVYHEDDEAFEIWDKLTGFGERKIKRISTSDNFWQMGDIGPCGPCSEIFYDHGEHLSGDIPEDKKDPGERYVEIWNLVFMQYIREQSGELARMECPCIDTGMGLERVAAILEGTDDNYKTKLFEAIVKESQNVTGNKDNQAAHKVIADHLRSASFLIADGVLPGNTGREYVLRRIIRRAVRYSHALGFDTVLLPKLFWVLKEWMGSHYQELTRAENLILDTLTLEEQSFRNTLKSGMKLLEEVSSSMKEGDTLSGDIAFTLYDTHGFPLDITVDILKERKISVDEEGFAERMKMQRLLAQASRMKDMAQTSSYEVKAVFLEHGKTPFIGYENFTGLALILAITEKEGSNKLTIILDQTIFYPESGGQESDQGIIEGENTLLKVEKVYKSTEGVILHECTIIRGQVTSRGEKVNLKIDINRRNSLARNHSATHILHHVLRKRLGAHVSQRGSLVAPSRLRFDFSHSQSITEEELSKIEDCINLMIWDDHPVMTEIKKTDEAIRDGAIGLFGEKYDDTVRVVSIGEAVELCGGTHVKKSSAIGLVKILSASSVAHGVRRIEAVTHLTALQYIREAEQAQLYQLTEHQAKLKAMQKSHQKEITRVYQSIVTNAEARTERYGSVEIITKNVQGISKEILLSLASEIRPKTGVLIVHTELSEALYSLIILDKEIFKNISFIDSMKETIDKSHGKVTPSVPYVIQATFSKKEDLDRCLKNLSELVVSTF.

Zn(2+) contacts are provided by H553, H557, C654, and H658.

This sequence belongs to the class-II aminoacyl-tRNA synthetase family. It depends on Zn(2+) as a cofactor.

The protein localises to the cytoplasm. The catalysed reaction is tRNA(Ala) + L-alanine + ATP = L-alanyl-tRNA(Ala) + AMP + diphosphate. Catalyzes the attachment of alanine to tRNA(Ala) in a two-step reaction: alanine is first activated by ATP to form Ala-AMP and then transferred to the acceptor end of tRNA(Ala). Also edits incorrectly charged Ser-tRNA(Ala) and Gly-tRNA(Ala) via its editing domain. This is Alanine--tRNA ligase from Neorickettsia sennetsu (strain ATCC VR-367 / Miyayama) (Ehrlichia sennetsu).